The primary structure comprises 89 residues: UPF0237 protein DIP1286 (89 aa).

One can recognise an ACT domain in the interval 4-78 (IISVTGADHT…KDQNLVIRIQ (75 aa)).

It belongs to the UPF0237 family.

In Corynebacterium diphtheriae (strain ATCC 700971 / NCTC 13129 / Biotype gravis), this protein is UPF0237 protein DIP1286.